We begin with the raw amino-acid sequence, 344 residues long: tRNA N6-adenosine threonylcarbamoyltransferase (344 aa).

Fe cation contacts are provided by H119 and H123. Substrate contacts are provided by residues 141-145, D174, G187, D191, and N280; that span reads VVSGG. D310 is a binding site for Fe cation.

The protein belongs to the KAE1 / TsaD family. Requires Fe(2+) as cofactor.

The protein localises to the cytoplasm. The catalysed reaction is L-threonylcarbamoyladenylate + adenosine(37) in tRNA = N(6)-L-threonylcarbamoyladenosine(37) in tRNA + AMP + H(+). Required for the formation of a threonylcarbamoyl group on adenosine at position 37 (t(6)A37) in tRNAs that read codons beginning with adenine. Is involved in the transfer of the threonylcarbamoyl moiety of threonylcarbamoyl-AMP (TC-AMP) to the N6 group of A37, together with TsaE and TsaB. TsaD likely plays a direct catalytic role in this reaction. In Listeria welshimeri serovar 6b (strain ATCC 35897 / DSM 20650 / CCUG 15529 / CIP 8149 / NCTC 11857 / SLCC 5334 / V8), this protein is tRNA N6-adenosine threonylcarbamoyltransferase.